The following is a 293-amino-acid chain: Ribonuclease HIII (293 aa).

Positions 78-293 (LPLIGTDEVG…TEKAKKRLER (216 aa)) constitute an RNase H type-2 domain. Aspartate 84, glutamate 85, and aspartate 187 together coordinate a divalent metal cation.

The protein belongs to the RNase HII family. RnhC subfamily. Mn(2+) is required as a cofactor. Mg(2+) serves as cofactor.

It localises to the cytoplasm. It catalyses the reaction Endonucleolytic cleavage to 5'-phosphomonoester.. Its function is as follows. Endonuclease that specifically degrades the RNA of RNA-DNA hybrids. This is Ribonuclease HIII from Streptococcus pneumoniae (strain 70585).